Consider the following 264-residue polypeptide: Transmembrane protein 41A (264 aa).

The first 17 residues, methionine 1–alanine 17, serve as a signal peptide directing secretion. 5 helical membrane-spanning segments follow: residues valine 67–glycine 87, phenylalanine 90–valine 110, leucine 153–leucine 173, alanine 175–proline 195, and tryptophan 219–isoleucine 239. Residues glycine 96 to leucine 207 form a VTT domain region.

This sequence belongs to the TMEM41 family.

It is found in the membrane. The chain is Transmembrane protein 41A (TMEM41A) from Bos taurus (Bovine).